The sequence spans 184 residues: Probable N-acetyltransferase san (184 aa).

Residues 6 to 155 (IELGDVTPHN…DAHVLQKTLR (150 aa)) form the N-acetyltransferase domain. Position 31 (Y31) interacts with substrate. Residue K47 is modified to N6-acetyllysine; by autocatalysis. The active site involves Y73. M75 is a binding site for substrate. Residue 77 to 90 (LGCLSPYRRLGIGT) coordinates acetyl-CoA. Residue H112 is part of the active site. 117-126 (NNGAIEFYKK) lines the CoA pocket. Residues 138–141 (YYKR) form a substrate region. The segment covering 157–174 (TAPNSNSTATSTTANSNS) has biased composition (low complexity). The disordered stretch occupies residues 157 to 176 (TAPNSNSTATSTTANSNSRS).

The protein belongs to the acetyltransferase family. Component of an acetyltransferase complex, at least composed of san, Ard1 and Nat1. In terms of processing, autoacetylated.

It is found in the cytoplasm. The enzyme catalyses N-terminal L-methionyl-L-alanyl-[protein] + acetyl-CoA = N-terminal N(alpha)-acetyl-L-methionyl-L-alanyl-[protein] + CoA + H(+). It carries out the reaction N-terminal L-methionyl-L-seryl-[protein] + acetyl-CoA = N-terminal N(alpha)-acetyl-L-methionyl-L-seryl-[protein] + CoA + H(+). The catalysed reaction is N-terminal L-methionyl-L-valyl-[protein] + acetyl-CoA = N-terminal N(alpha)-acetyl-L-methionyl-L-valyl-[protein] + CoA + H(+). It catalyses the reaction N-terminal L-methionyl-L-threonyl-[protein] + acetyl-CoA = N-terminal N(alpha)-acetyl-L-methionyl-L-threonyl-[protein] + CoA + H(+). The enzyme catalyses N-terminal L-methionyl-L-lysyl-[protein] + acetyl-CoA = N-terminal N(alpha)-acetyl-L-methionyl-L-lysyl-[protein] + CoA + H(+). It carries out the reaction N-terminal L-methionyl-L-leucyl-[protein] + acetyl-CoA = N-terminal N(alpha)-acetyl-L-methionyl-L-leucyl-[protein] + CoA + H(+). The catalysed reaction is N-terminal L-methionyl-L-phenylalanyl-[protein] + acetyl-CoA = N-terminal N(alpha)-acetyl-L-methionyl-L-phenylalanyl-[protein] + CoA + H(+). It catalyses the reaction N-terminal L-methionyl-L-tyrosyl-[protein] + acetyl-CoA = N-terminal N(alpha)-acetyl-L-methionyl-L-tyrosyl-[protein] + CoA + H(+). Functionally, N-alpha-acetyltransferase that acetylates the N-terminus of proteins that retain their initiating methionine. Has a broad substrate specificity: able to acetylate the initiator methionine of most peptides. Also displays N-epsilon-acetyltransferase activity by mediating acetylation of the side chain of specific lysines on proteins. Autoacetylates. Required for the establishment of sister chromatid cohesion and couple the processes of cohesion and DNA replication to ensure that only sister chromatids become paired together. Required for the interaction between Scc1/vtd and SMC3, possibly by mediating N-terminal acetylation of Scc1/vtd. Its function is as follows. (Microbial infection) Required for optimal replication of E.chaffeensis in the immune tissues, hemocytes, and fat body. This Drosophila melanogaster (Fruit fly) protein is Probable N-acetyltransferase san (san).